Here is a 638-residue protein sequence, read N- to C-terminus: Plasma kallikrein (638 aa).

The first 19 residues, 1 to 19, serve as a signal peptide directing secretion; it reads MILFNRVGYFVSLFATVSC. 4 Apple domains span residues 21–104, 111–194, 201–284, and 292–375; these read CMTQ…LKQC, CHRD…LKSC, CPMD…LLTC, and CHSK…LRLC. Cystine bridges form between Cys21–Cys104, Cys47–Cys77, Cys51–Cys57, Cys111–Cys194, Cys137–Cys166, Cys141–Cys147, Cys201–Cys284, Cys227–Cys256, Cys231–Cys237, Cys292–Cys375, Cys318–Cys347, Cys322–Cys328, Cys340–Cys345, Cys383–Cys503, Cys419–Cys435, Cys517–Cys584, Cys548–Cys563, and Cys574–Cys602. Asn127 carries an N-linked (GlcNAc...) asparagine glycan. A glycan (N-linked (GlcNAc...) asparagine) is linked at Asn215. Asn308 is a glycosylation site (N-linked (GlcNAc...) asparagine). The region spanning 391–626 is the Peptidase S1 domain; sequence IVGGTNASLG…YMDWILEKTQ (236 aa). N-linked (GlcNAc...) asparagine glycosylation occurs at Asn396. Catalysis depends on charge relay system residues His434 and Asp483. N-linked (GlcNAc...) asparagine glycosylation occurs at Asn494. The Charge relay system role is filled by Ser578.

The protein belongs to the peptidase S1 family. Plasma kallikrein subfamily. Forms a heterodimer with SERPINA5. The zymogen is activated by factor XIIa, which cleaves the molecule into a light chain, which contains the active site, and a heavy chain, which associates with HMW kininogen. These chains are linked by one or more disulfide bonds.

It localises to the secreted. It catalyses the reaction Cleaves selectively Arg-|-Xaa and Lys-|-Xaa bonds, including Lys-|-Arg and Arg-|-Ser bonds in (human) kininogen to release bradykinin.. Its activity is regulated as follows. Inhibited by SERPINA5. Functionally, the enzyme cleaves Lys-Arg and Arg-Ser bonds. It activates, in a reciprocal reaction, factor XII after its binding to a negatively charged surface. It also releases bradykinin from HMW kininogen and may also play a role in the renin-angiotensin system by converting prorenin into renin. This is Plasma kallikrein (Klkb1) from Mus musculus (Mouse).